The chain runs to 95 residues: Fatty acid-binding protein, liver (95 aa).

N6-succinyllysine is present on residues K13 and K18. S21 bears the Phosphoserine mark. K28 is subject to N6-succinyllysine. At T33 the chain carries Phosphothreonine. S38 carries the phosphoserine modification. N6-succinyllysine occurs at positions 39, 47, and 59. S69 bears the Phosphoserine mark. K90 is subject to N6-succinyllysine.

The protein belongs to the calycin superfamily. Fatty-acid binding protein (FABP) family. As to quaternary structure, monomer.

Its subcellular location is the cytoplasm. Functionally, this protein binds free fatty acids and their coenzyme A derivatives, bilirubin, and some other small molecules in the cytoplasm; it may be involved in intracellular lipid transport. This chain is Fatty acid-binding protein, liver (FABP1), found in Chaetophractus villosus (South American armadillo).